A 676-amino-acid chain; its full sequence is Probable potassium transport system protein Kup (676 aa).

A run of 12 helical transmembrane segments spans residues 14–34, 56–76, 97–117, 142–162, 173–193, 219–239, 252–272, 296–316, 345–365, 376–396, 402–422, and 429–449; these read GLLIAIGIVYGDIGTSPLYVM, ISLILWTVTLLTTVQTVIIAL, AAWLVWPALIGGAAILADGTL, VSNQTTVLVITIVILLVLFSI, AFGPIMLVWFAFLGVMGLINI, AGFAILGSIFLATTGAEALYS, SWPFVFVCLSLNYFGQGVWIL, LASIVLATLAAIIASQALITG, IYIPAVNKMLGITTIALVLFF, GLSITISMLTTTILLYEWLVL, LANLLFVIFFSTINILFMGSS, and GGYVSLLITLLIASVMVVWYF.

The protein belongs to the HAK/KUP transporter (TC 2.A.72) family.

The protein resides in the cell membrane. It catalyses the reaction K(+)(in) + H(+)(in) = K(+)(out) + H(+)(out). Its function is as follows. Transport of potassium into the cell. Likely operates as a K(+):H(+) symporter. In Lactobacillus delbrueckii subsp. bulgaricus (strain ATCC BAA-365 / Lb-18), this protein is Probable potassium transport system protein Kup.